The primary structure comprises 799 residues: Lon protease 4 (799 aa).

The region spanning 15–204 (FPLLPLRTGV…RVAGLLAEAS (190 aa)) is the Lon N-terminal domain. 356-363 (GPPGVGKT) lines the ATP pocket. One can recognise a Lon proteolytic domain in the interval 595-776 (TSVAGVATGL…SQVIAAALEE (182 aa)). Catalysis depends on residues Ser-682 and Lys-725.

This sequence belongs to the peptidase S16 family. Homohexamer. Organized in a ring with a central cavity.

Its subcellular location is the cytoplasm. The catalysed reaction is Hydrolysis of proteins in presence of ATP.. ATP-dependent serine protease that mediates the selective degradation of mutant and abnormal proteins as well as certain short-lived regulatory proteins. Required for cellular homeostasis and for survival from DNA damage and developmental changes induced by stress. Degrades polypeptides processively to yield small peptide fragments that are 5 to 10 amino acids long. Binds to DNA in a double-stranded, site-specific manner. The sequence is that of Lon protease 4 from Sorangium cellulosum (strain So ce56) (Polyangium cellulosum (strain So ce56)).